The primary structure comprises 245 residues: Terpene cyclase ausL (245 aa).

7 helical membrane passes run 17 to 37 (ILAISEVLKVVAAVGWSVNYI), 51 to 71 (IGILPLCCDIGWEFVYAWMFP), 76 to 96 (HWQGVVRVWFFLHSAVLLVTL), 113 to 133 (IVFIYIFVTIVFGAGQYALAA), 138 to 158 (ALGFHWGGALCQFLSSSGGIA), 170 to 190 (SYLIWFARAISTFAGFIKLCI), and 206 to 226 (MCWFYIVTVLSFDAAYPFLYF).

This sequence belongs to the paxB family.

The protein resides in the membrane. It functions in the pathway secondary metabolite biosynthesis; terpenoid biosynthesis. In terms of biological role, terpene cyclase; part of the gene cluster A that mediates the biosynthesis of the fungal meroterpenoid acetoxydehydroaustin. The first step of the pathway is the synthesis of 3,5-dimethylorsellinic acid by the polyketide synthase ausA. 3,5-dimethylorsellinic acid is then prenylated by the polyprenyl transferase ausN. Further epoxidation by the FAD-dependent monooxygenase ausM and cyclization by the probable terpene cyclase ausL lead to the formation of protoaustinoid A. Protoaustinoid A is then oxidized to spiro-lactone preaustinoid A3 by the combined action of the FAD-binding monooxygenases ausB and ausC, and the dioxygenase ausE. Acid-catalyzed keto-rearrangement and ring contraction of the tetraketide portion of preaustinoid A3 by ausJ lead to the formation of preaustinoid A4. The aldo-keto reductase ausK, with the help of ausH, is involved in the next step by transforming preaustinoid A4 into isoaustinone which is in turn hydroxylated by the P450 monooxygenase ausI to form austinolide. The cytochrome P450 monooxygenase ausG then modifies austinolide to austinol. Austinol is further acetylated to austin by the O-acetyltransferase ausP, which spontaneously changes to dehydroaustin. The cytochrome P450 monooxygenase then converts dehydroaustin is into 7-dehydrodehydroaustin. The hydroxylation catalyzed by ausR permits the second O-acetyltransferase ausQ to add an additional acetyl group to the molecule, leading to the formation of acetoxydehydroaustin. Due to genetic rearrangements of the clusters and the subsequent loss of some enzymes, the end product of the Penicillium brasilianum austinoid biosynthesis clusters is acetoxydehydroaustin. The chain is Terpene cyclase ausL from Penicillium brasilianum.